Reading from the N-terminus, the 426-residue chain is NADH-quinone oxidoreductase subunit F (426 aa).

Position 65-74 (65-74 (GRGGAGFPTG)) interacts with NAD(+). 176–223 (GAGAYICGEETALIESLEGKRGHPRLKPPYPVQKGLWGKPTVVNNVET) contacts FMN. Residues C347, C350, C353, and C393 each coordinate [4Fe-4S] cluster.

The protein belongs to the complex I 51 kDa subunit family. Requires FMN as cofactor. [4Fe-4S] cluster serves as cofactor.

It catalyses the reaction a quinone + NADH + 5 H(+)(in) = a quinol + NAD(+) + 4 H(+)(out). Its function is as follows. NDH-1 shuttles electrons from NADH, via FMN and iron-sulfur (Fe-S) centers, to quinones in the respiratory chain. Couples the redox reaction to proton translocation (for every two electrons transferred, four hydrogen ions are translocated across the cytoplasmic membrane), and thus conserves the redox energy in a proton gradient. This Aquifex aeolicus (strain VF5) protein is NADH-quinone oxidoreductase subunit F (nuoF).